Here is a 376-residue protein sequence, read N- to C-terminus: Methionine import ATP-binding protein MetN 2 (376 aa).

The disordered stretch occupies residues 1-25; sequence MTATAQRQRPIDTTGAGQRAQQAEL. One can recognise an ABC transporter domain in the interval 34–273; that stretch reads VRFINLGKTY…PQHEVSKTLL (240 aa). 70–77 serves as a coordination point for ATP; it reads GRSGAGKS.

It belongs to the ABC transporter superfamily. Methionine importer (TC 3.A.1.24) family. As to quaternary structure, the complex is composed of two ATP-binding proteins (MetN), two transmembrane proteins (MetI) and a solute-binding protein (MetQ).

The protein localises to the cell inner membrane. The enzyme catalyses L-methionine(out) + ATP + H2O = L-methionine(in) + ADP + phosphate + H(+). It carries out the reaction D-methionine(out) + ATP + H2O = D-methionine(in) + ADP + phosphate + H(+). Functionally, part of the ABC transporter complex MetNIQ involved in methionine import. Responsible for energy coupling to the transport system. In Pseudomonas syringae pv. syringae (strain B728a), this protein is Methionine import ATP-binding protein MetN 2.